The following is a 506-amino-acid chain: Cobyric acid synthase (506 aa).

A GATase cobBQ-type domain is found at 260–453 (KVGVAAIYFP…FHGIFNEPAV (194 aa)). Residue Cys-341 is the Nucleophile of the active site. The active site involves His-445.

The protein belongs to the CobB/CobQ family. CobQ subfamily.

It participates in cofactor biosynthesis; adenosylcobalamin biosynthesis. In terms of biological role, catalyzes amidations at positions B, D, E, and G on adenosylcobyrinic A,C-diamide. NH(2) groups are provided by glutamine, and one molecule of ATP is hydrogenolyzed for each amidation. This chain is Cobyric acid synthase, found in Chlorobium chlorochromatii (strain CaD3).